Reading from the N-terminus, the 426-residue chain is Phosphomethylpyrimidine synthase (426 aa).

Substrate is bound by residues N66, M95, Y124, H163, 185–187 (SRG), 226–229 (DGLR), and E265. H269 lines the Zn(2+) pocket. Position 292 (Y292) interacts with substrate. Position 333 (H333) interacts with Zn(2+). Residues C407, C410, and C414 each contribute to the [4Fe-4S] cluster site.

This sequence belongs to the ThiC family. [4Fe-4S] cluster serves as cofactor.

The catalysed reaction is 5-amino-1-(5-phospho-beta-D-ribosyl)imidazole + S-adenosyl-L-methionine = 4-amino-2-methyl-5-(phosphooxymethyl)pyrimidine + CO + 5'-deoxyadenosine + formate + L-methionine + 3 H(+). It participates in cofactor biosynthesis; thiamine diphosphate biosynthesis. Catalyzes the synthesis of the hydroxymethylpyrimidine phosphate (HMP-P) moiety of thiamine from aminoimidazole ribotide (AIR) in a radical S-adenosyl-L-methionine (SAM)-dependent reaction. The chain is Phosphomethylpyrimidine synthase from Thermococcus gammatolerans (strain DSM 15229 / JCM 11827 / EJ3).